The chain runs to 511 residues: Glutamyl-tRNA(Gln) amidotransferase subunit B, mitochondrial (511 aa).

Residues 1-6 (MLRRYL) constitute a mitochondrion transit peptide.

This sequence belongs to the GatB/GatE family. GatB subfamily. Subunit of the heterotrimeric GatFAB amidotransferase (AdT) complex, composed of A, B and F subunits.

The protein resides in the mitochondrion. It carries out the reaction L-glutamyl-tRNA(Gln) + L-glutamine + ATP + H2O = L-glutaminyl-tRNA(Gln) + L-glutamate + ADP + phosphate + H(+). Functionally, allows the formation of correctly charged Gln-tRNA(Gln) through the transamidation of misacylated Glu-tRNA(Gln) in the mitochondria. The reaction takes place in the presence of glutamine and ATP through an activated gamma-phospho-Glu-tRNA(Gln). This Lodderomyces elongisporus (strain ATCC 11503 / CBS 2605 / JCM 1781 / NBRC 1676 / NRRL YB-4239) (Yeast) protein is Glutamyl-tRNA(Gln) amidotransferase subunit B, mitochondrial.